The chain runs to 216 residues: Ras-related protein Rab-5C (216 aa).

GTP is bound by residues serine 30, alanine 31, glycine 33, lysine 34, serine 35, serine 36, histidine 47, glutamate 48, threonine 53, and glycine 79. Serine 35 serves as a coordination point for Mg(2+). 2 short sequence motifs (switch) span residues 45–57 (QFHE…IGAA) and 78–94 (AGQE…YRGA). Residue threonine 53 participates in Mg(2+) binding. Position 85 is a phosphoserine (serine 85). 5 residues coordinate GTP: asparagine 134, lysine 135, aspartate 137, alanine 165, and lysine 166. The disordered stretch occupies residues 185–216 (NEPQNAAGAPSRNRGVDLQENSPASRSQCCSN). The span at 203–216 (QENSPASRSQCCSN) shows a compositional bias: polar residues. Residues cysteine 213 and cysteine 214 are each lipidated (S-geranylgeranyl cysteine).

This sequence belongs to the small GTPase superfamily. Rab family. In terms of assembly, interacts with EEA1 and INCA1. Interacts with GDI1, GDI2, CHML and CHM; phosphorylation at Ser-85 disrupts this interaction. Mg(2+) is required as a cofactor. Post-translationally, phosphorylation of Ser-85 in the switch II region by LRRK2 prevents the association of RAB regulatory proteins, including CHM, CHML and RAB GDP dissociation inhibitors GDI1 and GDI2.

It localises to the cell membrane. It is found in the early endosome membrane. The protein localises to the melanosome. The catalysed reaction is GTP + H2O = GDP + phosphate + H(+). With respect to regulation, regulated by guanine nucleotide exchange factors (GEFs) which promote the exchange of bound GDP for free GTP. Regulated by GTPase activating proteins (GAPs) which increase the GTP hydrolysis activity. Inhibited by GDP dissociation inhibitors (GDIs). Functionally, the small GTPases Rab are key regulators of intracellular membrane trafficking, from the formation of transport vesicles to their fusion with membranes. Rabs cycle between an inactive GDP-bound form and an active GTP-bound form that is able to recruit to membranes different sets of downstream effectors directly responsible for vesicle formation, movement, tethering and fusion. This Canis lupus familiaris (Dog) protein is Ras-related protein Rab-5C (RAB5C).